The chain runs to 299 residues: MQRVINFSKYGSNVLIVSAVLILVGLIYTFFYHGGYNWGIDFSSRVNINLSIEKSNIKENEIKKIFSPIYKTLDVNSIFSPDQNKSEFSIMVKSDVIDYAFKTEVQKTILDKLKETFDANIEVLDSYFIDSSFSSTLRIRSIFLVLGTFILILIYITLRFKLSYAIASILSIFHDIFFIVAFLGVFRIEINSYIIVAILTIIGYSLNDTIIIFDRIRDNVKRLTDNTFLNVLNISISQTLSRTVLTSVTTFVAVFSIYVFTEGSIKDFSLVFMVGVIVGTYSSVFIASPILLNLYKKIK.

6 helical membrane passes run 14–34, 142–162, 166–186, 193–213, 245–265, and 270–290; these read VLIV…FYHG, IFLV…RFKL, IASI…LGVF, YIIV…IIIF, LTSV…EGSI, and LVFM…ASPI.

The protein belongs to the SecD/SecF family. SecF subfamily. Forms a complex with SecD. Part of the essential Sec protein translocation apparatus which comprises SecA, SecYEG and auxiliary proteins SecDF. Other proteins may also be involved.

It is found in the cell inner membrane. Part of the Sec protein translocase complex. Interacts with the SecYEG preprotein conducting channel. SecDF uses the proton motive force (PMF) to complete protein translocation after the ATP-dependent function of SecA. The protein is Protein translocase subunit SecF of Borreliella burgdorferi (strain ATCC 35210 / DSM 4680 / CIP 102532 / B31) (Borrelia burgdorferi).